The sequence spans 174 residues: Shikimate kinase 2 (174 aa).

12–17 (GCGKTT) lines the ATP pocket. 2 residues coordinate Mg(2+): threonine 16 and aspartate 32. Substrate-binding residues include aspartate 34, arginine 58, and glycine 79. The tract at residues 112–126 (QAAPEEDLRPTLTGK) is LID domain. Arginine 120 lines the ATP pocket. Residue arginine 139 participates in substrate binding.

This sequence belongs to the shikimate kinase family. AroL subfamily. Monomer. Requires Mg(2+) as cofactor.

Its subcellular location is the cytoplasm. It carries out the reaction shikimate + ATP = 3-phosphoshikimate + ADP + H(+). The protein operates within metabolic intermediate biosynthesis; chorismate biosynthesis; chorismate from D-erythrose 4-phosphate and phosphoenolpyruvate: step 5/7. Functionally, catalyzes the specific phosphorylation of the 3-hydroxyl group of shikimic acid using ATP as a cosubstrate. This Escherichia coli O7:K1 (strain IAI39 / ExPEC) protein is Shikimate kinase 2.